Here is a 74-residue protein sequence, read N- to C-terminus: uncharacterized protein (74 aa).

It is found in the mitochondrion. This is an uncharacterized protein from Marchantia polymorpha (Common liverwort).